The primary structure comprises 195 residues: Early E3 22.2 kDa glycoprotein (195 aa).

N-linked (GlcNAc...) asparagine; by host glycans are attached at residues Asn20, Asn61, Asn76, Asn88, Asn126, and Asn139.

The sequence is that of Early E3 22.2 kDa glycoprotein from Canine adenovirus serotype 1 (strain Glaxo) (CAdV-1).